We begin with the raw amino-acid sequence, 176 residues long: Translation initiation factor IF-3 (176 aa).

This sequence belongs to the IF-3 family. As to quaternary structure, monomer.

The protein resides in the cytoplasm. Its function is as follows. IF-3 binds to the 30S ribosomal subunit and shifts the equilibrium between 70S ribosomes and their 50S and 30S subunits in favor of the free subunits, thus enhancing the availability of 30S subunits on which protein synthesis initiation begins. The sequence is that of Translation initiation factor IF-3 from Streptococcus thermophilus (strain ATCC BAA-491 / LMD-9).